Consider the following 398-residue polypeptide: Dual-specificity RNA methyltransferase RlmN (398 aa).

Glutamate 119 (proton acceptor) is an active-site residue. The Radical SAM core domain maps to 125–364; the sequence is DGDRATLCVS…TIVRKTRGDD (240 aa). The cysteines at positions 132 and 369 are disulfide-linked. Positions 139, 143, and 146 each coordinate [4Fe-4S] cluster. Residues 193-194, serine 225, 247-249, and asparagine 326 each bind S-adenosyl-L-methionine; these read GE and SLH. The S-methylcysteine intermediate role is filled by cysteine 369.

It belongs to the radical SAM superfamily. RlmN family. The cofactor is [4Fe-4S] cluster.

The protein resides in the cytoplasm. It carries out the reaction adenosine(2503) in 23S rRNA + 2 reduced [2Fe-2S]-[ferredoxin] + 2 S-adenosyl-L-methionine = 2-methyladenosine(2503) in 23S rRNA + 5'-deoxyadenosine + L-methionine + 2 oxidized [2Fe-2S]-[ferredoxin] + S-adenosyl-L-homocysteine. The catalysed reaction is adenosine(37) in tRNA + 2 reduced [2Fe-2S]-[ferredoxin] + 2 S-adenosyl-L-methionine = 2-methyladenosine(37) in tRNA + 5'-deoxyadenosine + L-methionine + 2 oxidized [2Fe-2S]-[ferredoxin] + S-adenosyl-L-homocysteine. Functionally, specifically methylates position 2 of adenine 2503 in 23S rRNA and position 2 of adenine 37 in tRNAs. m2A2503 modification seems to play a crucial role in the proofreading step occurring at the peptidyl transferase center and thus would serve to optimize ribosomal fidelity. This chain is Dual-specificity RNA methyltransferase RlmN, found in Serratia proteamaculans (strain 568).